Reading from the N-terminus, the 246-residue chain is DNA repair protein RecO (246 aa).

The protein belongs to the RecO family.

In terms of biological role, involved in DNA repair and RecF pathway recombination. This Cutibacterium acnes (strain DSM 16379 / KPA171202) (Propionibacterium acnes) protein is DNA repair protein RecO.